The sequence spans 37 residues: Large ribosomal subunit protein bL36 (37 aa).

The protein belongs to the bacterial ribosomal protein bL36 family.

The protein is Large ribosomal subunit protein bL36 of Natranaerobius thermophilus (strain ATCC BAA-1301 / DSM 18059 / JW/NM-WN-LF).